A 315-amino-acid chain; its full sequence is Mycothiol acetyltransferase (315 aa).

N-acetyltransferase domains follow at residues 8-145 and 163-315; these read VETS…LPLD and VSLR…DATA. Glu-39 provides a ligand contact to 1D-myo-inositol 2-(L-cysteinylamino)-2-deoxy-alpha-D-glucopyranoside. Acetyl-CoA-binding positions include 81 to 83 and 89 to 94; these read LVV and HHGVGT. Glu-190, Lys-229, and Glu-243 together coordinate 1D-myo-inositol 2-(L-cysteinylamino)-2-deoxy-alpha-D-glucopyranoside. 247–249 contributes to the acetyl-CoA binding site; that stretch reads LGV. A 1D-myo-inositol 2-(L-cysteinylamino)-2-deoxy-alpha-D-glucopyranoside-binding site is contributed by Tyr-281. 286 to 291 is an acetyl-CoA binding site; it reads NTVAIR.

Belongs to the acetyltransferase family. MshD subfamily. In terms of assembly, monomer.

The catalysed reaction is 1D-myo-inositol 2-(L-cysteinylamino)-2-deoxy-alpha-D-glucopyranoside + acetyl-CoA = mycothiol + CoA + H(+). Catalyzes the transfer of acetyl from acetyl-CoA to desacetylmycothiol (Cys-GlcN-Ins) to form mycothiol. In Sanguibacter keddieii (strain ATCC 51767 / DSM 10542 / NCFB 3025 / ST-74), this protein is Mycothiol acetyltransferase.